The sequence spans 24 residues: Lycosin-I (24 aa).

It belongs to the cationic peptide 04 (cupiennin) family. 05 subfamily. Monomer in solution. Small size oligomers on the lipid membranes.

It is found in the secreted. The protein localises to the target cell membrane. Its function is as follows. Antimicrobial peptide that inhibits many reference strains of bacteria and fungi. Is potent against Candida species and multidrug-resistant Acinetobacter baumannii (MDRAB). Is probably localized in the cytoplasm after being transported through the cell wall and membrane. Is able to interact with cell membranes and enter into cell plasma to activate the mitochondrial death pathway to sensitize cancer cells for apoptosis, as well as up-regulates p27 to inhibit cell proliferation. It shows very low effect on normal cells, such as erythrocytes, Hek293t cells. It also potently inhibits tumor cell growth in vitro, and suppresses various tumor growth in vivo when tested in human cancer xenograft models. It interacts with the cell membrane and is then internalized into the cytoplasm of cancer cells to initiate the programmable cell death. In addition, this peptide has the therapeutic effects of anti-hypertension by endothelium-dependent vasodilatation via the NO/sGC/cGMP signaling pathway. In vivo, this peptide also shows a significant ability to inhibit T.gondii invasion and proliferation, making it a potential alternative agent for the treatment of toxoplasmosis. The sequence is that of Lycosin-I from Lycosa singoriensis (Wolf spider).